We begin with the raw amino-acid sequence, 251 residues long: Aquaporin TIP1-1 (251 aa).

Position 1 is an N-acetylmethionine (methionine 1). Topologically, residues methionine 1 to alanine 23 are cytoplasmic. A helical transmembrane segment spans residues leucine 24–phenylalanine 44. Residues asparagine 45–serine 56 lie on the Vacuolar side of the membrane. Residues glycine 57 to alanine 77 form a helical membrane-spanning segment. At asparagine 78–glycine 103 the chain is on the cytoplasmic side. Positions asparagine 85–alanine 87 match the NPA 1 motif. Residues isoleucine 104 to alanine 124 traverse the membrane as a helical segment. Residues threonine 125 to asparagine 143 are Vacuolar-facing. A helical transmembrane segment spans residues alanine 144–isoleucine 164. Over aspartate 165–glycine 172 the chain is Cytoplasmic. The chain crosses the membrane as a helical span at residues threonine 173–phenylalanine 193. The Vacuolar portion of the chain corresponds to serine 194–valine 218. Positions asparagine 199–alanine 201 match the NPA 2 motif. A helical membrane pass occupies residues tyrosine 219–isoleucine 239. At asparagine 240–tyrosine 251 the chain is on the cytoplasmic side.

It belongs to the MIP/aquaporin (TC 1.A.8) family. TIP (TC 1.A.8.10) subfamily. Interacts with cucumber mosaic virus (CMV) Protein 1a. In terms of tissue distribution, in all the vegetative organs, but not in seeds. Preferentially expressed in roots.

It localises to the vacuole membrane. Its function is as follows. Water channel required to facilitate the transport of water, diffusion of amino acids and/or peptides from the vacuolar compartment to the cytoplasm. Does not promote glycerol permeability. May play a role in the control of cell turgor and cell expansion. Its function is impaired by Hg(2+). May be involved in a vesicle-based metabolite routing through or between pre-vacuolar compartments and the central vacuole. Transports urea in yeast cells in a pH-independent manner. Transports H(2)O(2) in yeast cells. This Arabidopsis thaliana (Mouse-ear cress) protein is Aquaporin TIP1-1 (TIP1-1).